Here is a 475-residue protein sequence, read N- to C-terminus: UDP-N-acetylmuramate--L-alanine ligase (475 aa).

114 to 120 (GTHGKTT) provides a ligand contact to ATP.

Belongs to the MurCDEF family.

It is found in the cytoplasm. The enzyme catalyses UDP-N-acetyl-alpha-D-muramate + L-alanine + ATP = UDP-N-acetyl-alpha-D-muramoyl-L-alanine + ADP + phosphate + H(+). It functions in the pathway cell wall biogenesis; peptidoglycan biosynthesis. Its function is as follows. Cell wall formation. The chain is UDP-N-acetylmuramate--L-alanine ligase from Bartonella bacilliformis (strain ATCC 35685 / KC583 / Herrer 020/F12,63).